The chain runs to 374 residues: Queuine tRNA-ribosyltransferase (374 aa).

The Proton acceptor role is filled by aspartate 89. Substrate-binding positions include 89–93 (DSGGF), aspartate 143, glutamine 187, and glycine 214. The tract at residues 245-251 (GVGKPED) is RNA binding. Residue aspartate 264 is the Nucleophile of the active site. The RNA binding; important for wobble base 34 recognition stretch occupies residues 269–273 (TRNAR). Residues cysteine 302, cysteine 304, cysteine 307, and histidine 333 each coordinate Zn(2+).

It belongs to the queuine tRNA-ribosyltransferase family. As to quaternary structure, homodimer. Within each dimer, one monomer is responsible for RNA recognition and catalysis, while the other monomer binds to the replacement base PreQ1. Requires Zn(2+) as cofactor.

It carries out the reaction 7-aminomethyl-7-carbaguanine + guanosine(34) in tRNA = 7-aminomethyl-7-carbaguanosine(34) in tRNA + guanine. Its pathway is tRNA modification; tRNA-queuosine biosynthesis. Catalyzes the base-exchange of a guanine (G) residue with the queuine precursor 7-aminomethyl-7-deazaguanine (PreQ1) at position 34 (anticodon wobble position) in tRNAs with GU(N) anticodons (tRNA-Asp, -Asn, -His and -Tyr). Catalysis occurs through a double-displacement mechanism. The nucleophile active site attacks the C1' of nucleotide 34 to detach the guanine base from the RNA, forming a covalent enzyme-RNA intermediate. The proton acceptor active site deprotonates the incoming PreQ1, allowing a nucleophilic attack on the C1' of the ribose to form the product. After dissociation, two additional enzymatic reactions on the tRNA convert PreQ1 to queuine (Q), resulting in the hypermodified nucleoside queuosine (7-(((4,5-cis-dihydroxy-2-cyclopenten-1-yl)amino)methyl)-7-deazaguanosine). The protein is Queuine tRNA-ribosyltransferase of Photorhabdus laumondii subsp. laumondii (strain DSM 15139 / CIP 105565 / TT01) (Photorhabdus luminescens subsp. laumondii).